A 337-amino-acid polypeptide reads, in one-letter code: DNA-directed RNA polymerase subunit alpha (337 aa).

The segment at 1–233 (MIQKNWQELI…DQLSVFVNFK (233 aa)) is alpha N-terminal domain (alpha-NTD). Residues 249–337 (FNPALLKKVD…DLAKHYEDQY (89 aa)) are alpha C-terminal domain (alpha-CTD).

This sequence belongs to the RNA polymerase alpha chain family. Homodimer. The RNAP catalytic core consists of 2 alpha, 1 beta, 1 beta' and 1 omega subunit. When a sigma factor is associated with the core the holoenzyme is formed, which can initiate transcription.

The catalysed reaction is RNA(n) + a ribonucleoside 5'-triphosphate = RNA(n+1) + diphosphate. Its function is as follows. DNA-dependent RNA polymerase catalyzes the transcription of DNA into RNA using the four ribonucleoside triphosphates as substrates. The polypeptide is DNA-directed RNA polymerase subunit alpha (Bartonella bacilliformis (strain ATCC 35685 / KC583 / Herrer 020/F12,63)).